Reading from the N-terminus, the 187-residue chain is MSEMAELSELYEESSDLQMDVMPGEGDLPQMEVGSGSRELSLRPSRSGAQQLEEEGPMEEEEAQPMAAPEGKRSLANGPNAGEQPGQVAGADFESEDEGEEFDDWEDDYDYPEEEQLSGAGYRVSAALEEADKMFLRTREPALDGGFQMHYEKTPFDQLAFIEELFSLMVVNRLTEELGCDEIIDRE.

Residues 1–118 are disordered; that stretch reads MSEMAELSEL…YDYPEEEQLS (118 aa). 2 stretches are compositionally biased toward acidic residues: residues 52 to 63 and 93 to 116; these read LEEEGPMEEEEA and FESEDEGEEFDDWEDDYDYPEEEQ. Residues 54–120 form an interaction with NR0B2 region; the sequence is EEGPMEEEEA…YPEEEQLSGA (67 aa). The LXCXE motif motif lies at 178–182; the sequence is LGCDE.

As to quaternary structure, interacts via its LXCXE motif with the entire pocket region of RB1. Interacts with EP300, NR0B2 and TRIM27. Ubiquitinated in U2OS osteosarcoma cells and is rapidly degraded by proteasome as cells exit the cell cycle exit. In terms of tissue distribution, widely expressed. Most abundantly expressed in heart, skeletal muscle, pancreas, brain and testis. Expressed at much lower levels in placenta and peripheral blood leukocyte. Barely detectable in lung. Also weakly expressed in lung carcinoma A-549 and various leukemia cell lines.

It localises to the nucleus. Its subcellular location is the cytoplasm. Its function is as follows. Interacts with RB1 and EP300 and acts as a repressor of MYOD1 transactivation. Inhibits EP300 and CBP histone acetyltransferase activity. May be involved in coupling cell cycle exit to the transcriptional activation of genes required for cellular differentiation. May act as a candidate coinhibitory factor for NR0B2 that can be directly linked to transcription inhibitory mechanisms. The protein is EP300-interacting inhibitor of differentiation 1 of Homo sapiens (Human).